A 151-amino-acid polypeptide reads, in one-letter code: HTH-type transcriptional regulator FL11 (151 aa).

In terms of domain architecture, HTH asnC-type spans 5 to 66 (LDEIDRRIIK…IVNPEALGYS (62 aa)). The H-T-H motif DNA-binding region spans 24-43 (LREISKITGLAESTIHERIK). Residue 98–104 (ETTGDYD) participates in L-arginine binding. Residues Asn-118, Asp-122, and 133–135 (THT) each bind L-lysine. Residues Asp-122 and 133-135 (THT) contribute to the L-arginine site.

As to quaternary structure, homodimer. Binds DNA as a dimer and an octamer.

Its activity is regulated as follows. In the famine mode, FL11 forms dimers and acts as a repressor, leading to growth arrest. In the feast mode, in the presence of high concentrations of lysine or arginine, four dimers assemble into an octamer and cover the fl11 and lysine biosynthesis promoters. This leads to the inhibition of fl11 expression and lysine biosynthesis, decrease of the FL11 concentration in the cell, derepression of the target genes and activation of the metabolism. DNA-binding protein involved in the repression of transcription of a large number of genes, thereby arresting growth, in response to environmental changes. The polypeptide is HTH-type transcriptional regulator FL11 (Pyrococcus abyssi (strain GE5 / Orsay)).